Here is a 272-residue protein sequence, read N- to C-terminus: Soluble interferon gamma receptor OPG193 (272 aa).

A signal peptide spans methionine 1–asparagine 13. N-linked (GlcNAc...) asparagine; by host glycosylation is found at asparagine 42, asparagine 150, and asparagine 267.

The protein belongs to the type II cytokine receptor family. As to quaternary structure, homodimer. Interacts with host IFNG.

Its subcellular location is the secreted. Its function is as follows. Counteracts the antiviral effects of host IFN-gamma. Acts as a soluble IFN-gamma receptor and thus inhibits the interaction between host IFN-gamma and its receptor. This is Soluble interferon gamma receptor OPG193 (OPG193) from Bos taurus (Bovine).